Reading from the N-terminus, the 61-residue chain is Large ribosomal subunit protein bL32 (61 aa).

Positions 1-16 (MPTPKKKTSRSKRDMR) are enriched in basic residues. The interval 1–47 (MPTPKKKTSRSKRDMRRSHDGLTAPAIAVEKKTGELVRPHRAHKGAD) is disordered. Over residues 29–38 (VEKKTGELVR) the composition is skewed to basic and acidic residues.

This sequence belongs to the bacterial ribosomal protein bL32 family.

This Bdellovibrio bacteriovorus (strain ATCC 15356 / DSM 50701 / NCIMB 9529 / HD100) protein is Large ribosomal subunit protein bL32.